Here is a 1292-residue protein sequence, read N- to C-terminus: Epidermal growth factor receptor (1292 aa).

Over Met1–Pro641 the chain is Extracellular. Asn31, Asn224, Asn263, Asn323, Asn342, Asn600, and Asn605 each carry an N-linked (GlcNAc...) asparagine glycan. A helical transmembrane segment spans residues Ala642–Met662. Residues Tyr663–Val1292 lie on the Cytoplasmic side of the membrane. Position 675 is a phosphothreonine; by PKC (Thr675). Residues Met711–Leu978 enclose the Protein kinase domain. ATP is bound by residues Leu717–Val725 and Lys744. The active-site Proton acceptor is the Asp836. The segment at Pro1022–Gln1066 is disordered. The residue at position 1166 (Tyr1166) is a Phosphotyrosine; by autocatalysis. The interval Ser1253 to Val1292 is disordered. Basic and acidic residues predominate over residues Arg1258–Val1292.

It belongs to the protein kinase superfamily. Tyr protein kinase family. EGF receptor subfamily.

It localises to the membrane. It catalyses the reaction L-tyrosyl-[protein] + ATP = O-phospho-L-tyrosyl-[protein] + ADP + H(+). Its activity is regulated as follows. Activated by MRJP1 during queen determination of honeybee larvae. Upon binding to its ligands, transduces the signal through the ras-raf-MAPK pathway and is involved in a myriad of developmental decisions. Involved in the determination of adult size, ovary development, and development timing, especially during queen determination of honeybee larvae. May have an important role in the prolongation of longevity in queens. The polypeptide is Epidermal growth factor receptor (Egfr) (Apis mellifera (Honeybee)).